Reading from the N-terminus, the 623-residue chain is MNRYTTMRQLGDGTYGSVLMGKSNESGELVAIKRMKRKFYSWDECMNLREVKSLKKLNHANVIKLKEVIRENDHLYFIFEYMKENLYQLMKDRNKLFPESVIRNIMYQILQGLAFIHKHGFFHRDMKPENLLCMGPELVKIADFGLARELRSQPPYTDYVSTRWYRAPEVLLRSSVYSSPIDVWAVGSIMAELYMLRPLFPGTSEVDEIFKICQVLGTPKKSDWPEGYQLASSMNFRFPQCVPINLKTLIPNASNEAIQLMTEMLNWDPKKRPTASQALKHPYFQVGQVLGPSSNHLESKQSLNKQLQPLESKPSLVEVEPKPLPDIIDQVVGQPQPKTSQQPLQPIQPPQNLSVQQPPKQQSQEKPPQTLFPSIVKNMPTKPNGTLSHKSGRRRWGQTIFKSGDSWEELEDYDFGASHSKKPSMGVFKEKRKKDSPFRLPEPVPSGSNHSTGENKSLPAVTSLKSDSELSTAPTSKQYYLKQSRYLPGVNPKKVSLIASGKEINPHTWSNQLFPKSLGPVGAELAFKRSNAGNLGSYATYNQSGYIPSFLKKEVQSAGQRIHLAPLNATASEYTWNTKTGRGQFSGRTYNPTAKNLNIVNRAQPIPSVHGRTDWVAKYGGHR.

The 281-residue stretch at 4–284 (YTTMRQLGDG…ASQALKHPYF (281 aa)) folds into the Protein kinase domain. ATP is bound by residues 10 to 18 (LGDGTYGSV) and K33. The Proton acceptor role is filled by D125. The residue at position 157 (T157) is a Phosphothreonine; by autocatalysis. Y159 is subject to Phosphotyrosine; by autocatalysis. 2 disordered regions span residues 328–396 (IDQV…RRRW) and 416–469 (GASH…SDSE). Residues 356 to 369 (QQPPKQQSQEKPPQ) are compositionally biased toward low complexity. Positions 446–455 (SGSNHSTGEN) are enriched in polar residues.

It belongs to the protein kinase superfamily. CMGC Ser/Thr protein kinase family. CDC2/CDKX subfamily. As to quaternary structure, interacts with RP1. Interacts with AR and CDK20. Found in a complex containing MAK, AR and NCOA3. Interacts with FZR1 (via WD repeats). The cofactor is Mg(2+). Post-translationally, autophosphorylated. Phosphorylated on serine and threonine residues. In terms of tissue distribution, expressed in prostate cancer cell lines at generally higher levels than in normal prostate epithelial cell lines. Isoform 1 is expressed in kidney, testis, lung, trachea, and retina. Isoform 2 is retina-specific where it is expressed in rod and cone photoreceptors.

The protein resides in the nucleus. It localises to the cytoplasm. Its subcellular location is the cytoskeleton. It is found in the microtubule organizing center. The protein localises to the centrosome. The protein resides in the spindle. It localises to the midbody. Its subcellular location is the cell projection. It is found in the cilium. The protein localises to the photoreceptor outer segment. The protein resides in the photoreceptor inner segment. The enzyme catalyses L-seryl-[protein] + ATP = O-phospho-L-seryl-[protein] + ADP + H(+). It carries out the reaction L-threonyl-[protein] + ATP = O-phospho-L-threonyl-[protein] + ADP + H(+). Functionally, essential for the regulation of ciliary length and required for the long-term survival of photoreceptors. Phosphorylates FZR1 in a cell cycle-dependent manner. Plays a role in the transcriptional coactivation of AR. Could play an important function in spermatogenesis. May play a role in chromosomal stability in prostate cancer cells. The polypeptide is Serine/threonine-protein kinase MAK (MAK) (Homo sapiens (Human)).